The chain runs to 512 residues: Solute carrier family 2, facilitated glucose transporter member 7 (512 aa).

At 1–21 (MENKEAGTPPPIPSREGRLQP) the chain is on the cytoplasmic side. Residues 22-42 (TLLLATLSAAFGSAFQYGYNL) traverse the membrane as a helical segment. Residues 43-78 (SVVNTPHKVFKSFYNETYFERHATFMDGKLMLLLWS) are Extracellular-facing. The N-linked (GlcNAc...) asparagine glycan is linked to asparagine 57. The chain crosses the membrane as a helical span at residues 79–99 (CTVSMFPLGGLLGSLLVGLLV). The Cytoplasmic segment spans residues 100-107 (DSCGRKGT). Residues 108-128 (LLINNIFAIIPAILMGVSKVA) traverse the membrane as a helical segment. The Extracellular segment spans residues 129–138 (KAFELIVFSR). The helical transmembrane segment at 139–159 (VVLGVCAGISYSALPMYLGEL) threads the bilayer. The Cytoplasmic portion of the chain corresponds to 160–172 (APKNLRGMVGTMT). Residues 173–193 (EVFVIVGVFLAQIFSLQAILG) form a helical membrane-spanning segment. Topologically, residues 194–198 (NPAGW) are extracellular. Residues 199–219 (PVLLALTGVPALLQLLTLPFF) form a helical membrane-spanning segment. Over 220–281 (PESPRYSLIQ…LHLCALRSLR (62 aa)) the chain is Cytoplasmic. The helical transmembrane segment at 282-302 (WQLLSIIVLMAGQQLSGINAI) threads the bilayer. D-glucose-binding positions include 294-295 (QQ) and asparagine 300. The Extracellular portion of the chain corresponds to 303–321 (NYYADTIYTSAGVEAAHSQ). The helical transmembrane segment at 322–342 (YVTVGSGVVNIVMTITSAVLV) threads the bilayer. Residue asparagine 331 participates in D-glucose binding. Residues 343 to 350 (ERLGRRHL) lie on the Cytoplasmic side of the membrane. Residues 351 to 371 (LLAGYGICGSACLVLTVVLLF) traverse the membrane as a helical segment. At 372-379 (QNRVPELS) the chain is on the extracellular side. Residues 380–400 (YLGIICVFAYIAGHSIGPSPV) form a helical membrane-spanning segment. The Cytoplasmic portion of the chain corresponds to 401-415 (PSVVRTEIFLQSSRR). A helical membrane pass occupies residues 416-436 (AAFMVDGAVHWLTNFIIGFLF). Topologically, residues 437 to 445 (PSIQEAIGA) are extracellular. The chain crosses the membrane as a helical span at residues 446–466 (YSFIIFAGICLLTAIYIYVVI). Residues 467-512 (PETKGKTFVEINRIFAKRNRVKLPEEKEETIDAGPPTASPAKETSF) are Cytoplasmic-facing. A disordered region spans residues 491-512 (EEKEETIDAGPPTASPAKETSF).

This sequence belongs to the major facilitator superfamily. Sugar transporter (TC 2.A.1.1) family. Glucose transporter subfamily. In terms of tissue distribution, expressed in small intestine and colon. Weakly expressed in testis and prostate.

Its subcellular location is the cell membrane. The protein resides in the apical cell membrane. It carries out the reaction D-glucose(out) = D-glucose(in). The catalysed reaction is D-fructose(out) = D-fructose(in). Its activity is regulated as follows. Glucose and fructose transport are inhibited by the flavonoid apigenin. Probable sugar transporter. Even if its physiological substrate is subject to discussion, it is able to transport glucose and fructose. Does not transport galactose, 2-deoxy-d-glucose and xylose. This chain is Solute carrier family 2, facilitated glucose transporter member 7, found in Homo sapiens (Human).